The following is a 72-amino-acid chain: Sec-independent protein translocase protein TatA (72 aa).

Residues 1 to 21 form a helical membrane-spanning segment; that stretch reads MGSFSIWHWLIVLAVVLLLFG. Residues 43 to 72 are disordered; the sequence is MADEDAKEDPRTIDAKAEEPVKDVKKTTKS. Basic and acidic residues predominate over residues 50–72; sequence EDPRTIDAKAEEPVKDVKKTTKS.

Belongs to the TatA/E family. The Tat system comprises two distinct complexes: a TatABC complex, containing multiple copies of TatA, TatB and TatC subunits, and a separate TatA complex, containing only TatA subunits. Substrates initially bind to the TatABC complex, which probably triggers association of the separate TatA complex to form the active translocon.

Its subcellular location is the cell inner membrane. In terms of biological role, part of the twin-arginine translocation (Tat) system that transports large folded proteins containing a characteristic twin-arginine motif in their signal peptide across membranes. TatA could form the protein-conducting channel of the Tat system. This Brucella suis biovar 1 (strain 1330) protein is Sec-independent protein translocase protein TatA.